A 401-amino-acid chain; its full sequence is Phosphoglycerate kinase (401 aa).

Residues 20-22 (DFN), Arg-35, 58-61 (HLGR), Arg-117, and Arg-154 contribute to the substrate site. ATP-binding positions include Lys-204, Gly-298, Glu-329, and 358 to 361 (GGDS).

This sequence belongs to the phosphoglycerate kinase family. As to quaternary structure, monomer.

The protein resides in the cytoplasm. It carries out the reaction (2R)-3-phosphoglycerate + ATP = (2R)-3-phospho-glyceroyl phosphate + ADP. The protein operates within carbohydrate degradation; glycolysis; pyruvate from D-glyceraldehyde 3-phosphate: step 2/5. The protein is Phosphoglycerate kinase of Bifidobacterium longum (strain DJO10A).